Consider the following 757-residue polypeptide: MSESTYPSVKDLTLEEKASLTSGGDAWHLQGVESKGIPGYMITDGPHGLRKSLASSAGETDLDDSVPATCFPPAAGLSSSWNPELIHKVGEAMAEECIQEKVAVILGPGVNIKRNPLGGRCFEYWSEDPYLAGHEAIGIVEGVQSKGVGTSLKHFAANNQESDRLRVDARISPRALREIYFPAFEHIVKKAQPWTIMCSYNRINGVHSAQNHWLLTDVLRDEWGFEGIVMSDWGADHDRGASLNAGLNLEMPPSYTDDQIVYAVRDGRITPAQLDRMAQGMIDLVNKTRAAMSIDNYRFDVDAHDEVAHQAAIESIVMLKNDDAILPLNAGPVANPSAMPQKIAVIGEFARTPRYQGGGSSHITPTKMTSFLDTLAERGIKADFAPGFTLDLEPADPALESEAVETAKNADVVLMFLGLPEAAESEGFDRDTLDMPAKQITLLEQVAAANQNVVVVLSNGSVITVAPWAKNAKGILESWLLGQSGGPALADVIFGQVSPSGKLAQSIPLDINDDPSMTNWPGEEGHVDYGEGVFVGYRYYDTYGKAVDCPFGYGLSYATFEITGVAVAKTGANTATVNATVTNTSDVDAAETVQVYVAPGKADVARPKHELKGFTKVFLKSGESKTVTIDLDERAFAYWSEKYNDWHVESGEYAIEVGTSSRDIAETVTVALEGDGKTQPLTEWSTYGEWEADPFGAKIVAAVAAAGEAGELPKLPDNAMMRMFLNSMPINSLPTLLGEGGKKIAQFMVDEYAKLSK.

Asp232 is a catalytic residue.

Belongs to the glycosyl hydrolase 3 family. In terms of assembly, homotetramer.

Its activity is regulated as follows. Completely inhibited by Cu(2+) and Fe(2+). Functionally, catalyzes the hydrolysis of a non-reducing terminal alpha-L-arabinopyranosidic linkage in ginsenoside Rb2 (alpha-L-arabinopyranosyl-(1-&gt;6)-alpha-D-glucopyranosyl) to release alpha-D-glucopyranosyl (Rd). It is not able to hydrolyze alpha-L-arabinofuranosyl-(1-&gt;6)-alpha-D-glucopyranosyl (Rc). This Bifidobacterium breve (strain ACS-071-V-Sch8b) protein is Exo-alpha-(1-&gt;6)-L-arabinopyranosidase.